An 85-amino-acid chain; its full sequence is Turripeptide PaIAa (85 aa).

The protein belongs to the turripeptide family. In terms of tissue distribution, expressed by the venom duct.

The protein resides in the secreted. Its function is as follows. Is lethal to drosophila larvae. This is Turripeptide PaIAa from Polystira albida (White giant-turris).